We begin with the raw amino-acid sequence, 303 residues long: Serine/threonine-protein phosphatase PP-X homolog 1 (303 aa).

Mn(2+)-binding residues include D51, H53, D79, and N111. Residue H112 is the Proton donor of the active site. Positions 161 and 235 each coordinate Mn(2+).

Belongs to the PPP phosphatase family. PP-4 (PP-X) subfamily. Mn(2+) is required as a cofactor.

It carries out the reaction O-phospho-L-seryl-[protein] + H2O = L-seryl-[protein] + phosphate. The enzyme catalyses O-phospho-L-threonyl-[protein] + H2O = L-threonyl-[protein] + phosphate. The sequence is that of Serine/threonine-protein phosphatase PP-X homolog 1 (Ppx1) from Paramecium tetraurelia.